A 743-amino-acid chain; its full sequence is 1,4-alpha-glucan branching enzyme GlgB (743 aa).

Asp-416 serves as the catalytic Nucleophile. The active-site Proton donor is Glu-469.

The protein belongs to the glycosyl hydrolase 13 family. GlgB subfamily. Monomer.

It catalyses the reaction Transfers a segment of a (1-&gt;4)-alpha-D-glucan chain to a primary hydroxy group in a similar glucan chain.. Its pathway is glycan biosynthesis; glycogen biosynthesis. Its function is as follows. Catalyzes the formation of the alpha-1,6-glucosidic linkages in glycogen by scission of a 1,4-alpha-linked oligosaccharide from growing alpha-1,4-glucan chains and the subsequent attachment of the oligosaccharide to the alpha-1,6 position. The polypeptide is 1,4-alpha-glucan branching enzyme GlgB (Shewanella baltica (strain OS155 / ATCC BAA-1091)).